The chain runs to 344 residues: S-adenosylmethionine:tRNA ribosyltransferase-isomerase (344 aa).

It belongs to the QueA family. As to quaternary structure, monomer.

It localises to the cytoplasm. It catalyses the reaction 7-aminomethyl-7-carbaguanosine(34) in tRNA + S-adenosyl-L-methionine = epoxyqueuosine(34) in tRNA + adenine + L-methionine + 2 H(+). Its pathway is tRNA modification; tRNA-queuosine biosynthesis. Functionally, transfers and isomerizes the ribose moiety from AdoMet to the 7-aminomethyl group of 7-deazaguanine (preQ1-tRNA) to give epoxyqueuosine (oQ-tRNA). The polypeptide is S-adenosylmethionine:tRNA ribosyltransferase-isomerase (Heliobacterium modesticaldum (strain ATCC 51547 / Ice1)).